A 303-amino-acid polypeptide reads, in one-letter code: sn-1-specific diacylglycerol lipase ABHD11 (303 aa).

A mitochondrion-targeting transit peptide spans 1 to 22 (MLRWTRAWTAPYRGIGLSNSSF). Residues 55–290 (PALVFLHGLF…NAGHWVHSDR (236 aa)) form the AB hydrolase-1 domain. At lysine 75 the chain carries N6-succinyllysine. Catalysis depends on charge relay system residues serine 129, aspartate 225, and histidine 284.

The protein belongs to the AB hydrolase superfamily. As to quaternary structure, interacts with OGDH and DLST; this interaction maintains the functional lipoylation of the 2-oxoglutarate dehydrogenase complex. Post-translationally, phosphorylated.

The protein localises to the mitochondrion. The protein resides in the mitochondrion matrix. The catalysed reaction is a 1,3-diacyl-sn-glycerol + H2O = a 1-acyl-sn-glycerol + a fatty acid + H(+). It catalyses the reaction 1-octadecanoyl-2-(9Z-octadecenoyl)-sn-glycerol + H2O = 2-(9Z-octadecenoyl)-glycerol + octadecanoate + H(+). It carries out the reaction 1-octadecanoyl-2-(4Z,7Z,10Z,13Z,16Z,19Z-docosahexaenoyl)-sn-glycerol + H2O = 2-(4Z,7Z,10Z,13Z,16Z,19Z-docosahexaenoyl)-glycerol + octadecanoate + H(+). The enzyme catalyses a 1,2-diacyl-sn-glycerol + H2O = a 2-acylglycerol + a fatty acid + H(+). The catalysed reaction is 1,2-didecanoylglycerol + H2O = decanoylglycerol + decanoate + H(+). It catalyses the reaction 1-octadecanoyl-2-(5Z,8Z,11Z,14Z-eicosatetraenoyl)-sn-glycerol + H2O = 2-(5Z,8Z,11Z,14Z-eicosatetraenoyl)-glycerol + octadecanoate + H(+). With respect to regulation, the diacylglycerol lipase activity can be modulated by phosphorylation by cAMP-dependent protein kinase. Catalyzes the hydrolysis of diacylglycerol in vitro and may function as a key regulator in lipid metabolism, namely by regulating the intracellular levels of diacylglycerol. 1,2-diacyl-sn-glycerols are the preferred substrate over 1,3-diacyl-sn-glycerols. The enzyme hydrolyzes stearate in preference to palmitate from the sn-1 position of 1,2-diacyl-sn-glycerols. Maintains the functional lipoylation of the 2-oxoglutarate dehydrogenase complex (OGDHc) through its interaction with the OGDHc by preventing the formation of lipoyl adducts. In addition, is also required for the expansion and differentiation of embryonic stem cells (ESCs). The sequence is that of sn-1-specific diacylglycerol lipase ABHD11 from Bos taurus (Bovine).